The chain runs to 700 residues: Acyl-coenzyme A oxidase 3 (700 aa).

Belongs to the acyl-CoA oxidase family. Heteropentamer composed of five different subunits. FAD is required as a cofactor.

It localises to the peroxisome. It carries out the reaction a 2,3-saturated acyl-CoA + O2 = a (2E)-enoyl-CoA + H2O2. The protein operates within lipid metabolism; peroxisomal fatty acid beta-oxidation. Oxidizes aliphatic acyl-CoA substrates of different chain lengths such as hexanoyl-CoA, decanoyl-CoA and myristoyl-CoA as well as aromatic/heterocyclic ring-substituted chromogenic substrates, such as furylpropionyl-CoA. Of the above substrates, the efficiency of the enzyme, exhibits the following order: decanoyl-CoA &gt; myristoyl-CoA &gt; hexanoyl-CoA &gt; furyl-propionyl-CoA. This Yarrowia lipolytica (strain CLIB 122 / E 150) (Yeast) protein is Acyl-coenzyme A oxidase 3 (POX3).